The sequence spans 426 residues: Tyrosine-protein phosphatase non-receptor type 20 (426 aa).

Residues 1-10 (MSSPRKVRGK) show a composition bias toward basic residues. Residues 1-58 (MSSPRKVRGKTGRDNDEEEGNSGNLNLRNSLPSSSQKMTPTKPIFGNKMNSENVKPSH) form a disordered region. Over residues 21 to 35 (NSGNLNLRNSLPSSS) the composition is skewed to low complexity. At S76 the chain carries Phosphoserine. The segment covering 95 to 117 (NSMDSETAGPSKTVSPVLSGSSR) has biased composition (polar residues). Residues 95-124 (NSMDSETAGPSKTVSPVLSGSSRLSKDTET) form a disordered region. The residue at position 127 (S127) is a Phosphoserine. In terms of domain architecture, Tyrosine-protein phosphatase spans 165 to 418 (IIREFLELEQ…QFCYEIVLEV (254 aa)). Substrate is bound by residues D329, 359–365 (CSAGVGR), and Q403. C359 (phosphocysteine intermediate) is an active-site residue.

It belongs to the protein-tyrosine phosphatase family. Non-receptor class subfamily. As to expression, testis-specific. Specifically expressed in testicular germ cells that undergo meiosis (at protein level).

It localises to the nucleus. The protein localises to the cytoplasm. Its subcellular location is the cytoskeleton. It is found in the microtubule organizing center. The protein resides in the centrosome. The catalysed reaction is O-phospho-L-tyrosyl-[protein] + H2O = L-tyrosyl-[protein] + phosphate. Functionally, tyrosine-protein phosphatase targeted to sites of actin polymerization in response of varied extracellular stimuli. Has tyrosine phosphatase activity towards various tyrosyl phosphorylated substrates. In Mus musculus (Mouse), this protein is Tyrosine-protein phosphatase non-receptor type 20 (Ptpn20).